Here is a 276-residue protein sequence, read N- to C-terminus: MQEEWLFINTHKNNPYYNMAMDEALLNLVSQGALPPVIRFYGWAPKTLSIGYFQKLEKEIDLDKVNAGGYGLVRRATGGRGVLHDKELTYSVIVPESHPMMPESVTAAYKVISTGLLEGFKNLGFQAEFSVPRTKEDRERLKDPRSSVCFDASSWYELVVEGKKIAGSAQTRQKGVILQHGSILQSIDVDELFDLFIFSSERLKERMKRSFYSKAVSIADLTDEEITIAMMEEAFYEGFEKGLDIKLKPFEVTAEIEQEVSVLIEKYRSEEWLKRR.

Residues 32 to 247 (GALPPVIRFY…GFEKGLDIKL (216 aa)) enclose the BPL/LPL catalytic domain. The active-site Acyl-thioester intermediate is Cys149.

The protein belongs to the octanoyltransferase LipM family. Monomer.

It catalyses the reaction octanoyl-[ACP] + L-lysyl-[protein] = N(6)-octanoyl-L-lysyl-[protein] + holo-[ACP] + H(+). The protein operates within protein modification; protein lipoylation via endogenous pathway; protein N(6)-(lipoyl)lysine from octanoyl-[acyl-carrier-protein]. Its function is as follows. Catalyzes the transfer of endogenously produced octanoic acid from octanoyl-acyl-carrier-protein onto the lipoyl domain of GcvH, an intermediate carrier during protein lipoylation. The polypeptide is Octanoyltransferase LipM (Macrococcus caseolyticus (strain JCSC5402) (Macrococcoides caseolyticum)).